Reading from the N-terminus, the 396-residue chain is Ornithine aminotransferase 2 (396 aa).

N6-(pyridoxal phosphate)lysine is present on K255.

Belongs to the class-III pyridoxal-phosphate-dependent aminotransferase family. OAT subfamily. Requires pyridoxal 5'-phosphate as cofactor.

The protein localises to the cytoplasm. It carries out the reaction a 2-oxocarboxylate + L-ornithine = L-glutamate 5-semialdehyde + an L-alpha-amino acid. The protein operates within amino-acid biosynthesis; L-proline biosynthesis; L-glutamate 5-semialdehyde from L-ornithine: step 1/1. Its function is as follows. Catalyzes the interconversion of ornithine to glutamate semialdehyde. This Staphylococcus saprophyticus subsp. saprophyticus (strain ATCC 15305 / DSM 20229 / NCIMB 8711 / NCTC 7292 / S-41) protein is Ornithine aminotransferase 2.